A 276-amino-acid chain; its full sequence is Large ribosomal subunit protein uL2 (276 aa).

Residues 212–276 (NRHRGIRPQT…KLIISRKKHK (65 aa)) form a disordered region. A compositionally biased stretch (basic residues) spans 257-276 (YKTRKKKASDKLIISRKKHK).

This sequence belongs to the universal ribosomal protein uL2 family. In terms of assembly, part of the 50S ribosomal subunit. Forms a bridge to the 30S subunit in the 70S ribosome.

Its function is as follows. One of the primary rRNA binding proteins. Required for association of the 30S and 50S subunits to form the 70S ribosome, for tRNA binding and peptide bond formation. It has been suggested to have peptidyltransferase activity; this is somewhat controversial. Makes several contacts with the 16S rRNA in the 70S ribosome. This is Large ribosomal subunit protein uL2 from Helicobacter pylori (strain HPAG1).